A 507-amino-acid chain; its full sequence is MGRKKIQIQRITDERNRQVTFTKRKFGLMKKAYELSVLCDCEIALIIFNHSNKLFQYASTDMDKVLLKYTEYNEPHESRTNADIIETLRKKGFNGCDSPEPDGEDSLEQSPLLEDKYRRASEELDGLFRRYGSSVPAPNFAMPVTVPVSNQSSMQFSNPSSSLVTPSLVTSSLTDPRLLSPQQPALQRNSVSPGLPQRPASAGAMLGRDLNSANGACPNPVGNGYVSARASPGLLPVANGNGLNKVIPAKSPPPPTHNTQLGAPSRKPDLRVITSQGGKGLMHHLNNAQRLGVSQSTHSLTTPVVSVATPSLLSQGLPFSSMPTAYNTDYQLPSAELSSLPAFSSPAGLALGNVTAWQQPQQPQQPQPPQPPQSQPQPPQPQPQQPPQQQPHLVPVSLSNLIPGSPLPHVGAALTVTTHPHISIKSEPVSPSRERSPAPPPPAVFPAARPEPGEGLSSPAGGSYETGDRDDGRGDFGPTLGLLRPAPEPEAEGSAVKRMRLDTWTLK.

The 55-residue stretch at 3-57 (RKKIQIQRITDERNRQVTFTKRKFGLMKKAYELSVLCDCEIALIIFNHSNKLFQY) folds into the MADS-box domain. A DNA-binding region (mef2-type) is located at residues 58–86 (ASTDMDKVLLKYTEYNEPHESRTNADIIE). A phosphoserine mark is found at Ser98, Ser106, Ser110, Ser121, and Ser180. A disordered region spans residues 174–207 (TDPRLLSPQQPALQRNSVSPGLPQRPASAGAMLG). The span at 180–192 (SPQQPALQRNSVS) shows a compositional bias: polar residues. Ser190 carries the post-translational modification Phosphoserine; by PKA. At Ser231 the chain carries Phosphoserine. Disordered regions lie at residues 244–267 (NKVI…PSRK), 357–392 (WQQP…QQPH), and 423–507 (SIKS…WTLK). At Lys245 the chain carries N6-acetyllysine. Position 251 is a phosphoserine (Ser251). Residues 363-389 (PQQPQPPQPPQSQPQPPQPQPQQPPQQ) show a composition bias toward pro residues. Position 425 is an N6-acetyllysine; alternate (Lys425). A Glycyl lysine isopeptide (Lys-Gly) (interchain with G-Cter in SUMO); alternate cross-link involves residue Lys425. Ser430 carries the phosphoserine modification.

Forms a complex with class II HDACs in undifferentiating cells. On myogenic differentiation, HDACs are released into the cytoplasm allowing MEF2s to interact with other proteins for activation. Interacts with HDAC4 (in undifferentiating cells); the interaction translocates MEF2D to nuclear dots. Forms a heterodimer with MEF2A. Interacts with MAPK7; the interaction phosphorylates but does not activate MEF2D. Interacts with MYOG. Interacts with CCAR2 and HDAC3. Phosphorylated on Ser-430 by CDK5 is required for Lys-425 sumoylation and inhibits transcriptional activity. In neurons, enhanced CDK5 activity induced by neurotoxins promotes caspase 3-mediated cleavage leading to neuron apoptosis. Phosphorylation on Ser-180 can be enhanced by EGF. Phosphorylated and activated by CaMK4. In terms of processing, acetylated on Lys-425 by CREBBP. Acetylated by EP300. Deacetylated by SIRT1 and HDAC3. Post-translationally, sumoylated on Lys-425 with SUMO2 but not SUMO1; which inhibits transcriptional activity and myogenic activity. Desumoylated by SENP3.

It localises to the nucleus. Transcriptional activator which binds specifically to the MEF2 element, 5'-YTA[AT](4)TAR-3', found in numerous muscle-specific, growth factor- and stress-induced genes. Mediates cellular functions not only in skeletal and cardiac muscle development, but also in neuronal differentiation and survival. Plays diverse roles in the control of cell growth, survival and apoptosis via p38 MAPK signaling in muscle-specific and/or growth factor-related transcription. Plays a critical role in the regulation of neuronal apoptosis. The chain is Myocyte-specific enhancer factor 2D (Mef2d) from Rattus norvegicus (Rat).